Reading from the N-terminus, the 289-residue chain is MRKLSSLVCGAGAGLAAFYLSRLRDPQKAAHSSWTNSEKPVDACGLWDSNWDCRDPRLMVRPLKNTQPEEENRFNADLEKAKPKKARHIILVRHGEYLDVGESDATHHLTERGRKQAQFTGQRLSELGIQWDKVIASTMVRAQETADIILKEIKYDKEKVVNCVYLREGAPIPPQPPVGHWKPEASQFYRDGARIEAAFRRYFHRAYPDQDKESYTLIVGHGNVIRYFVCRALQFPPEGWLRISINHASITWLTISPSGNVSIKYLGDSGFMPVQYLTNRIPRDAKNVV.

The helical transmembrane segment at 7–23 (LVCGAGAGLAAFYLSRL) threads the bilayer.

It belongs to the phosphoglycerate mutase family. BPG-dependent PGAM subfamily. Interacts with Pk92B/ASK1.

It is found in the mitochondrion outer membrane. It carries out the reaction O-phospho-L-seryl-[protein] + H2O = L-seryl-[protein] + phosphate. The enzyme catalyses O-phospho-L-threonyl-[protein] + H2O = L-threonyl-[protein] + phosphate. In terms of biological role, displays phosphatase activity for serine/threonine residues, and dephosphorylates and activates Pk92B kinase. Has apparently no phosphoglycerate mutase activity. In Drosophila ananassae (Fruit fly), this protein is Serine/threonine-protein phosphatase Pgam5, mitochondrial.